A 227-amino-acid polypeptide reads, in one-letter code: Esterase OVCA2 (227 aa).

Residues Ser-120, Asp-180, and His-207 each act as charge relay system in the active site.

This sequence belongs to the LovG family.

The enzyme catalyses a carboxylic ester + H2O = an alcohol + a carboxylate + H(+). In terms of biological role, exhibits ester hydrolase activity with a strong preference for long-chain alkyl ester substrates and high selectivity against a variety of short, branched, and substituted esters. Is able to hydrolyze ester bonds within a wide range of p-nitrophenyl derivatives (C2-C14) in vitro, with a strong preference toward substrates of &gt;8 carbons. The protein is Esterase OVCA2 (ovca2) of Danio rerio (Zebrafish).